Consider the following 90-residue polypeptide: Acylphosphatase (90 aa).

Positions 5-90 (GCKVIVSGIV…YQKTNDFIAC (86 aa)) constitute an Acylphosphatase-like domain. Residues arginine 20 and asparagine 38 contribute to the active site.

It belongs to the acylphosphatase family.

It carries out the reaction an acyl phosphate + H2O = a carboxylate + phosphate + H(+). In Psychromonas ingrahamii (strain DSM 17664 / CCUG 51855 / 37), this protein is Acylphosphatase (acyP).